An 852-amino-acid chain; its full sequence is Zinc finger protein 484 (852 aa).

A KRAB domain is found at 8–78 (VSFKDVTVDF…DGEIPSQSRP (71 aa)). Lys-156 is covalently cross-linked (Glycyl lysine isopeptide (Lys-Gly) (interchain with G-Cter in SUMO2)). The C2H2-type 1; degenerate zinc-finger motif lies at 223–245 (CECNQCGKPLHHKQALIQQQKIH). The C2H2-type 2; degenerate zinc finger occupies 279-301 (HECHECEAVFTQKSQLDGSQRVY). Residues 328–350 (YKCSDYGRAFIQKSDLFRCQRIH) form a C2H2-type 3; degenerate zinc finger. The segment at 356–378 (YEYSECEKNLPQNSNLNIHKKIH) adopts a C2H2-type 4; degenerate zinc-finger fold. 15 consecutive C2H2-type zinc fingers follow at residues 384 to 406 (FECT…QKIH), 412 to 434 (YVCT…ERIH), 440 to 462 (YECS…QRIH), 468 to 490 (FICS…QKIH), 496 to 518 (YICT…QKIH), 524 to 546 (YKCS…QKCH), 552 to 574 (YECS…QRIH), 580 to 602 (YVCT…ERIH), 608 to 630 (YECS…QQIH), 636 to 658 (YRCA…QKIH), 664 to 686 (YKCS…QQSH), 692 to 714 (YECS…QRIH), 720 to 742 (YICN…RRIH), 748 to 770 (YECS…HRIH), and 776 to 798 (YICA…QKIH). Lys-816 participates in a covalent cross-link: Glycyl lysine isopeptide (Lys-Gly) (interchain with G-Cter in SUMO2).

The protein belongs to the krueppel C2H2-type zinc-finger protein family.

It localises to the nucleus. In terms of biological role, may be involved in transcriptional regulation. The chain is Zinc finger protein 484 (ZNF484) from Homo sapiens (Human).